The following is a 555-amino-acid chain: Urocanate hydratase (555 aa).

Residues 52–53 (GG), Gln-130, 176–178 (GMG), Glu-196, Arg-201, 242–243 (NA), 263–267 (QTSAH), 272–273 (YL), and Tyr-321 each bind NAD(+). Residue Cys-409 is part of the active site. Gly-491 lines the NAD(+) pocket.

This sequence belongs to the urocanase family. NAD(+) serves as cofactor.

Its subcellular location is the cytoplasm. It catalyses the reaction 4-imidazolone-5-propanoate = trans-urocanate + H2O. It participates in amino-acid degradation; L-histidine degradation into L-glutamate; N-formimidoyl-L-glutamate from L-histidine: step 2/3. Its function is as follows. Catalyzes the conversion of urocanate to 4-imidazolone-5-propionate. The protein is Urocanate hydratase of Nocardioides sp. (strain ATCC BAA-499 / JS614).